An 859-amino-acid polypeptide reads, in one-letter code: Anoctamin-7 (859 aa).

The Cytoplasmic segment spans residues 1 to 297; it reads MLRGQAREED…YFAWLGFYTG (297 aa). The interval 25–50 is disordered; the sequence is GCSYGSTAQASEAGKQQVAPSRVGSS. The helical transmembrane segment at 298-318 threads the bilayer; that stretch reads WLLPAAVVGTVVFLVGCFLVF. Over 319 to 362 the chain is Extracellular; that stretch reads SDIPTQELCHSSDSFDMCPLCSDCSFWLLSSACTLAQAGRLFDH. Residues 363-383 traverse the membrane as a helical segment; sequence GGTVFFSLFMALWAVLLLEYW. The Cytoplasmic segment spans residues 384-441; the sequence is KRKNATLAYRWDCSDYEDIEERPRPQFAATAPMTALNPITGEDEPYFPEKNRVRRMLA. The helical transmembrane segment at 442–462 threads the bilayer; the sequence is GSVVLLMMVAVVIMCLVSVIL. At 463-492 the chain is on the extracellular side; it reads YRAVMAIIVSRSDNAFLSAWASRIASLTGS. A helical membrane pass occupies residues 493 to 513; sequence VVNLVFILILSKVYVLLAQVL. Topologically, residues 514–530 are cytoplasmic; sequence TRWEMHRTQTEFEDAFT. The chain crosses the membrane as a helical span at residues 531–551; it reads LKVFIFQFVNFYASPVYIAFF. The Extracellular portion of the chain corresponds to 552–651; sequence KGRFVGYPGN…FHEYLEMVLQ (100 aa). A helical membrane pass occupies residues 652-672; that stretch reads FGFVTIFVAACPLAPLFALLN. Topologically, residues 673 to 700 are cytoplasmic; sequence NWVEIRLDARKFVCEYRRPVAERAQDIG. The helical transmembrane segment at 701–721 threads the bilayer; sequence IWFHILTGLTHLAVISNAFLL. Residues 722 to 780 lie on the Extracellular side of the membrane; the sequence is AFSSDFLPRVYYSWTHAPDLHGFLNFTLARAPPTFTSAHNRTCRYRAFRDDDGHYSPTY. Asn746 and Asn761 each carry an N-linked (GlcNAc...) asparagine glycan. A helical membrane pass occupies residues 781-801; the sequence is WTLLAIRLAFVIVFEHVVFSI. Residues 802-859 are Cytoplasmic-facing; the sequence is GRVLDLLVPDIPESVEIKVKREYYLAKQALAENEALLGATGVKDDQPPSSEPSLGLPA.

Belongs to the anoctamin family. As to expression, highly expressed in the stomach. Expressed at low levels in small intestine and large intestine.

The protein resides in the cell membrane. Its subcellular location is the endoplasmic reticulum. It carries out the reaction a 1,2-diacyl-sn-glycero-3-phospho-L-serine(in) = a 1,2-diacyl-sn-glycero-3-phospho-L-serine(out). The enzyme catalyses a beta-D-galactosyl-(1&lt;-&gt;1')-N-acylsphing-4-enine(out) = a beta-D-galactosyl-(1&lt;-&gt;1')-N-acylsphing-4-enine(in). The catalysed reaction is a 1,2-diacyl-sn-glycero-3-phosphocholine(in) = a 1,2-diacyl-sn-glycero-3-phosphocholine(out). Functionally, has calcium-dependent phospholipid scramblase activity; scrambles phosphatidylserine, phosphatidylcholine and galactosylceramide. Does not exhibit calcium-activated chloride channel (CaCC) activity. May play a role in cell-cell interactions. The protein is Anoctamin-7 (Ano7) of Mus musculus (Mouse).